Reading from the N-terminus, the 716-residue chain is Fatty acid oxidation complex subunit alpha (716 aa).

The interval 1-189 (MIYQSPTIQV…KVGAVDAVVA (189 aa)) is enoyl-CoA hydratase/isomerase. Aspartate 296 contacts substrate. A 3-hydroxyacyl-CoA dehydrogenase region spans residues 311-716 (KDVKSAAVLG…AANNGSYYQA (406 aa)). Residues methionine 324, aspartate 343, 400–402 (VVE), lysine 407, and serine 429 contribute to the NAD(+) site. Catalysis depends on histidine 450, which acts as the For 3-hydroxyacyl-CoA dehydrogenase activity. Position 453 (asparagine 453) interacts with NAD(+). Substrate-binding residues include asparagine 500 and tyrosine 660.

In the N-terminal section; belongs to the enoyl-CoA hydratase/isomerase family. It in the C-terminal section; belongs to the 3-hydroxyacyl-CoA dehydrogenase family. As to quaternary structure, heterotetramer of two alpha chains (FadB) and two beta chains (FadA).

It catalyses the reaction a (3S)-3-hydroxyacyl-CoA + NAD(+) = a 3-oxoacyl-CoA + NADH + H(+). The catalysed reaction is a (3S)-3-hydroxyacyl-CoA = a (2E)-enoyl-CoA + H2O. The enzyme catalyses a 4-saturated-(3S)-3-hydroxyacyl-CoA = a (3E)-enoyl-CoA + H2O. It carries out the reaction (3S)-3-hydroxybutanoyl-CoA = (3R)-3-hydroxybutanoyl-CoA. It catalyses the reaction a (3Z)-enoyl-CoA = a 4-saturated (2E)-enoyl-CoA. The catalysed reaction is a (3E)-enoyl-CoA = a 4-saturated (2E)-enoyl-CoA. It participates in lipid metabolism; fatty acid beta-oxidation. Its function is as follows. Involved in the aerobic and anaerobic degradation of long-chain fatty acids via beta-oxidation cycle. Catalyzes the formation of 3-oxoacyl-CoA from enoyl-CoA via L-3-hydroxyacyl-CoA. It can also use D-3-hydroxyacyl-CoA and cis-3-enoyl-CoA as substrate. This Shewanella sp. (strain MR-7) protein is Fatty acid oxidation complex subunit alpha.